The primary structure comprises 106 residues: Cytochrome c oxidase assembly factor 3 homolog, mitochondrial (106 aa).

The segment at Met1 to Gln34 is disordered. The residue at position 2 (Ala2) is an N-acetylalanine. Residues Ala2–Asn57 lie on the Mitochondrial matrix side of the membrane. Residues Ile58–Ser78 traverse the membrane as a helical segment. Positions Ser78 to Ser104 form a coiled coil. Over Ile79–Ser106 the chain is Mitochondrial intermembrane.

Belongs to the COA3 family. Along with COX14, core component of the MITRAC (mitochondrial translation regulation assembly intermediate of cytochrome c oxidase complex) complex. Interacts with MT-CO1/COX1, SMIM20, SURF1 and TIMM21.

It localises to the mitochondrion inner membrane. Functionally, core component of the MITRAC (mitochondrial translation regulation assembly intermediate of cytochrome c oxidase complex) complex, that regulates cytochrome c oxidase assembly. MITRAC complexes regulate both translation of mitochondrial encoded components and assembly of nuclear-encoded components imported in mitochondrion. Required for efficient translation of MT-CO1 and mitochondrial respiratory chain complex IV assembly. This Homo sapiens (Human) protein is Cytochrome c oxidase assembly factor 3 homolog, mitochondrial (COA3).